The following is a 555-amino-acid chain: Potassium-transporting ATPase potassium-binding subunit (555 aa).

The next 10 helical transmembrane spans lie at 2–22, 60–80, 130–150, 173–193, 246–266, 278–298, 374–394, 412–432, 483–503, and 525–545; these read IWVAVVITMLLFILVAKPTGI, QYALSLVLLNGFMIVVVYFIF, IGITFLMFAAPATTLALVMAF, VFLPIAFVTALVFVALGVPQT, MSNILQMMLMMLLPTALPFTY, ILFVSLFMVFLLGFITITTSE, AGFVNIITYAIIAVFISGLMV, LIAVTILFHPLLILGFSALAL, LVMFLGRYFSLVTMLAVAASL, and GIFIGTIVIVGALTFFPMLVL.

This sequence belongs to the KdpA family. In terms of assembly, the system is composed of three essential subunits: KdpA, KdpB and KdpC.

It is found in the cell membrane. Part of the high-affinity ATP-driven potassium transport (or Kdp) system, which catalyzes the hydrolysis of ATP coupled with the electrogenic transport of potassium into the cytoplasm. This subunit binds the extracellular potassium ions and delivers the ions to the membrane domain of KdpB through an intramembrane tunnel. The chain is Potassium-transporting ATPase potassium-binding subunit from Bacillus thuringiensis subsp. konkukian (strain 97-27).